We begin with the raw amino-acid sequence, 99 residues long: Evasin P1162 (99 aa).

The signal sequence occupies residues 1–28 (MEVKTFAFLQIAVCIAIGIELICAGTNA). 3 disulfides stabilise this stretch: cysteine 40/cysteine 59, cysteine 44/cysteine 61, and cysteine 55/cysteine 72. 4 N-linked (GlcNAc...) asparagine glycosylation sites follow: asparagine 43, asparagine 49, asparagine 58, and asparagine 85.

Its subcellular location is the secreted. Its function is as follows. Salivary chemokine-binding protein which binds to host chemokines CXCL1, CXCL2, CXCL3, CXCL5 and CXCL8. In Ixodes ricinus (Common tick), this protein is Evasin P1162.